Consider the following 387-residue polypeptide: 3-ketoacyl-CoA thiolase (387 aa).

The active-site Acyl-thioester intermediate is Cys91. Catalysis depends on proton acceptor residues His343 and Cys373.

Belongs to the thiolase-like superfamily. Thiolase family. In terms of assembly, heterotetramer of two alpha chains (FadB) and two beta chains (FadA).

The protein localises to the cytoplasm. It carries out the reaction an acyl-CoA + acetyl-CoA = a 3-oxoacyl-CoA + CoA. It functions in the pathway lipid metabolism; fatty acid beta-oxidation. Catalyzes the final step of fatty acid oxidation in which acetyl-CoA is released and the CoA ester of a fatty acid two carbons shorter is formed. The chain is 3-ketoacyl-CoA thiolase from Pectobacterium carotovorum subsp. carotovorum (strain PC1).